A 219-amino-acid polypeptide reads, in one-letter code: Histidinol-phosphate aminotransferase (219 aa).

Belongs to the class-II pyridoxal-phosphate-dependent aminotransferase family. Histidinol-phosphate aminotransferase subfamily. In terms of assembly, homodimer. Pyridoxal 5'-phosphate serves as cofactor.

It carries out the reaction L-histidinol phosphate + 2-oxoglutarate = 3-(imidazol-4-yl)-2-oxopropyl phosphate + L-glutamate. It participates in amino-acid biosynthesis; L-histidine biosynthesis; L-histidine from 5-phospho-alpha-D-ribose 1-diphosphate: step 7/9. The chain is Histidinol-phosphate aminotransferase (hisC) from Mycolicibacterium smegmatis (Mycobacterium smegmatis).